The primary structure comprises 242 residues: Mannose-P-dolichol utilization defect 1 protein homolog (242 aa).

The region spanning 37 to 95 (LSRGLGFAITLGSILLFVPQILKIQAARSAQGISAASQLLALVGAIGTASYSYRSGFVF) is the PQ-loop 1 domain. 7 helical membrane-spanning segments follow: residues 40–60 (GLGF…ILKI), 68–88 (GISA…ASYS), 98–118 (WGDS…IFLF), 120–140 (GQTM…YGVV), 148–168 (TLTA…LLQI), 180–200 (LSLI…FTSV), and 207–227 (LLIV…AQFF). In terms of domain architecture, PQ-loop 2 spans 152 to 202 (VQTAGIPIVVVSKLLQISQNYRAQSTGQLSLISVFLQFAGTLARVFTSVQD).

The protein belongs to the MPDU1 (TC 2.A.43.3) family.

It localises to the membrane. This Caenorhabditis elegans protein is Mannose-P-dolichol utilization defect 1 protein homolog.